A 272-amino-acid polypeptide reads, in one-letter code: Dioscorin DB3L (272 aa).

Residues 1–25 form the signal peptide; that stretch reads MSSSTLFHLFLLSSLLFSCLSNARP. The Alpha-carbonic anhydrase domain maps to 28-263; it reads DDFSYIEGSP…LKFRTIFFYP (236 aa). A disulfide bridge connects residues Cys53 and Cys213.

Belongs to the alpha-class carbonic anhydrase family. In terms of assembly, homodimer; disulfide-linked. Not glycosylated. In terms of tissue distribution, expressed in tuber (at protein level).

With respect to regulation, loss of hemagglutinating activity by EDTA treatment. The activity is fully recovered by the addition of 5 mM Ca(2+) ions, but not with Mg(2+) and Mn 2(+). Hemagglutination activity is inhibited by maltose and its derivatives, with maltopentaose and maltohexaose being the best inhibitors followed by maltose and iso maltose. Not inhibited by glycoproteins. Maltose-binding lectin. No affinity is detected toward glucose. Has hemagglutinating activity against rabbit erythrocytes at 3.9 ug/ml. No carbonate dehydratase or trypsin inhibitor activity detected by measuring the hydrolysis of 4-nitrophenyl acetate or the inhibition of bovine trypsin-catalyzed hydrolysis of N-benzoyl-L-arginine ethyl ester, respectively. In Dioscorea polystachya (Chinese yam), this protein is Dioscorin DB3L.